A 154-amino-acid polypeptide reads, in one-letter code: IQ domain-containing protein F3 (154 aa).

Positions 89 to 118 constitute an IQ domain; sequence QEQATVKLQSCIRMWQCRQCYRQMCNALCL.

This is IQ domain-containing protein F3 (IQCF3) from Homo sapiens (Human).